The following is a 397-amino-acid chain: Sulfate adenylyltransferase (397 aa).

This sequence belongs to the sulfate adenylyltransferase family.

It carries out the reaction sulfate + ATP + H(+) = adenosine 5'-phosphosulfate + diphosphate. It participates in sulfur metabolism; hydrogen sulfide biosynthesis; sulfite from sulfate: step 1/3. The protein is Sulfate adenylyltransferase (sat) of Allochromatium vinosum (strain ATCC 17899 / DSM 180 / NBRC 103801 / NCIMB 10441 / D) (Chromatium vinosum).